The chain runs to 132 residues: MSLTDPVADFLTRIRNAIRARHQKLDVPASKLKAEIARILKEEGYIANYKTTEEEGRAILRVYLKYGSNNEAAIRDLSRVSRPGCRVYIGRDEIKRVQGGLGISIMTTPRGVMTGRQARREGVGGEILCEVW.

Belongs to the universal ribosomal protein uS8 family. As to quaternary structure, part of the 30S ribosomal subunit. Contacts proteins S5 and S12.

Functionally, one of the primary rRNA binding proteins, it binds directly to 16S rRNA central domain where it helps coordinate assembly of the platform of the 30S subunit. The chain is Small ribosomal subunit protein uS8 from Acidobacterium capsulatum (strain ATCC 51196 / DSM 11244 / BCRC 80197 / JCM 7670 / NBRC 15755 / NCIMB 13165 / 161).